The primary structure comprises 269 residues: Energy-coupling factor transporter ATP-binding protein EcfA1 (269 aa).

One can recognise an ABC transporter domain in the interval 8 to 242 (ITFNHVRFKY…GDGLTEIGLD (235 aa)). Residue 42–49 (GHNGSGKS) participates in ATP binding.

It belongs to the ABC transporter superfamily. Energy-coupling factor EcfA family. As to quaternary structure, forms a stable energy-coupling factor (ECF) transporter complex composed of 2 membrane-embedded substrate-binding proteins (S component), 2 ATP-binding proteins (A component) and 2 transmembrane proteins (T component).

It localises to the cell membrane. Functionally, ATP-binding (A) component of a common energy-coupling factor (ECF) ABC-transporter complex. Unlike classic ABC transporters this ECF transporter provides the energy necessary to transport a number of different substrates. In Staphylococcus saprophyticus subsp. saprophyticus (strain ATCC 15305 / DSM 20229 / NCIMB 8711 / NCTC 7292 / S-41), this protein is Energy-coupling factor transporter ATP-binding protein EcfA1.